Here is a 398-residue protein sequence, read N- to C-terminus: Dual-specificity RNA methyltransferase RlmN (398 aa).

Glu119 (proton acceptor) is an active-site residue. Positions 125 to 364 (DGDRATLCVS…TIVRKTRGDD (240 aa)) constitute a Radical SAM core domain. A disulfide bridge connects residues Cys132 and Cys369. Cys139, Cys143, and Cys146 together coordinate [4Fe-4S] cluster. Residues 193-194 (GE), Ser225, 247-249 (SLH), and Asn326 each bind S-adenosyl-L-methionine. Cys369 functions as the S-methylcysteine intermediate in the catalytic mechanism.

It belongs to the radical SAM superfamily. RlmN family. [4Fe-4S] cluster is required as a cofactor.

It localises to the cytoplasm. The catalysed reaction is adenosine(2503) in 23S rRNA + 2 reduced [2Fe-2S]-[ferredoxin] + 2 S-adenosyl-L-methionine = 2-methyladenosine(2503) in 23S rRNA + 5'-deoxyadenosine + L-methionine + 2 oxidized [2Fe-2S]-[ferredoxin] + S-adenosyl-L-homocysteine. It catalyses the reaction adenosine(37) in tRNA + 2 reduced [2Fe-2S]-[ferredoxin] + 2 S-adenosyl-L-methionine = 2-methyladenosine(37) in tRNA + 5'-deoxyadenosine + L-methionine + 2 oxidized [2Fe-2S]-[ferredoxin] + S-adenosyl-L-homocysteine. Functionally, specifically methylates position 2 of adenine 2503 in 23S rRNA and position 2 of adenine 37 in tRNAs. m2A2503 modification seems to play a crucial role in the proofreading step occurring at the peptidyl transferase center and thus would serve to optimize ribosomal fidelity. The chain is Dual-specificity RNA methyltransferase RlmN from Serratia proteamaculans (strain 568).